The sequence spans 268 residues: Regulatory protein zeste (268 aa).

A DNA-binding region spans residues 1–72; the sequence is TAEEKEVLYT…WLNSRLRKQY (72 aa). The span at 94 to 108 shows a compositional bias: low complexity; that stretch reads VSVASAVPQQQQQQH. The disordered stretch occupies residues 94-133; that stretch reads VSVASAVPQQQQQQHHQQHDNVKEEPEYQISPDASEHNPQ. Over residues 110-119 the composition is skewed to basic and acidic residues; sequence QQHDNVKEEP.

In terms of assembly, self-associates forming complexes of several hundred monomers.

It is found in the nucleus. Functionally, involved in transvection phenomena (= synapsis-dependent gene expression), where the synaptic pairing of chromosomes carrying genes with which zeste interacts influences the expression of these genes. Zeste binds to DNA and stimulates transcription from a nearby promoter. The polypeptide is Regulatory protein zeste (z) (Drosophila sechellia (Fruit fly)).